A 76-amino-acid chain; its full sequence is UPF0291 protein BPUM_1689 (76 aa).

Disordered stretches follow at residues 1–31 (MISK…TEQK) and 56–76 (DPEG…QNLH). Composition is skewed to basic and acidic residues over residues 12–31 (ELSK…TEQK) and 63–76 (TPEK…QNLH).

This sequence belongs to the UPF0291 family.

It is found in the cytoplasm. The chain is UPF0291 protein BPUM_1689 from Bacillus pumilus (strain SAFR-032).